A 56-amino-acid polypeptide reads, in one-letter code: Preprotein translocase subunit SecG (56 aa).

The Cytoplasmic segment spans residues 1–29; that stretch reads MAKDKTTLPPTGAGLMRFFDEDTRAIKVS. The helical transmembrane segment at 30–51 threads the bilayer; it reads PKGVIAIVLVLIAFEVFLHLFG. The Extracellular portion of the chain corresponds to 52-56; that stretch reads PSIFG.

Belongs to the SEC61-beta family. As to quaternary structure, component of the protein translocase complex. Heterotrimer consisting of alpha (SecY), beta (SecG) and gamma (SecE) subunits. Can form oligomers of the heterotrimer.

The protein localises to the cell membrane. Involved in protein export. The function of the beta subunit is unknown, but it may be involved in stabilization of the trimeric complex. The chain is Preprotein translocase subunit SecG from Thermococcus gammatolerans (strain DSM 15229 / JCM 11827 / EJ3).